The following is a 176-amino-acid chain: Small ribosomal subunit protein uS5 (176 aa).

The 64-residue stretch at 11-74 folds into the S5 DRBM domain; sequence LSEVLVDVNR…QAAKKRMMKV (64 aa).

Belongs to the universal ribosomal protein uS5 family. Part of the 30S ribosomal subunit. Contacts proteins S4 and S8.

In terms of biological role, with S4 and S12 plays an important role in translational accuracy. Functionally, located at the back of the 30S subunit body where it stabilizes the conformation of the head with respect to the body. This Rickettsia rickettsii (strain Iowa) protein is Small ribosomal subunit protein uS5.